Reading from the N-terminus, the 290-residue chain is Short chain dehydrogenase andI (290 aa).

NADP(+) is bound by residues isoleucine 35, asparagine 120, arginine 154, tyrosine 186, lysine 190, valine 219, and threonine 221. Tyrosine 186 (proton acceptor) is an active-site residue. Lysine 190 functions as the Lowers pKa of active site Tyr in the catalytic mechanism.

This sequence belongs to the short-chain dehydrogenases/reductases (SDR) family.

The protein operates within secondary metabolite biosynthesis; terpenoid biosynthesis. In terms of biological role, short chain dehydrogenase; part of the gene cluster that mediates the biosynthesis of anditomin, a fungal meroterpenoid. The first step of the pathway is the synthesis of 3,5-dimethylorsellinic acid (DMOA) by the polyketide synthase andM. DMOA is then converted to the phthalide compound 5,7-dihydroxy-4,6-dimethylphthalide (DHDMP) by the cytochrome P450 monooxygenase andK, which is further prenylated by the prenyltransferase andD to yield farnesyl-DHDMP. Further epoxidation by the FAD-dependent monooxygenase andE leads to epoxyfarnesyl-DHDMP. The next step involves the terpene cyclase andB that converts epoxyfarnesyl-DHDMP into preandiloid A through opening of the epoxide ring followed by the cyclization of the farnesyl moiety. Preandiloid A is in turn oxidized at the C-3 hydroxyl group to yield preandiloid B by the dehydrogenase andC. The dioxygenase andA is solely responsible for the dehydrogenation of preandiloid B leading to the enone preandiloid C, as well as for the intriguing structural rearrangement to generate the bicyclo[2.2.2]octane core, transforming preandiloid C into andiconin. FAD-binding monooxygenase andJ then produces andilesin D which is reduced by dehydrogenase andI to yield andilesin A. Action of acetyltransferase andG followed by a spontaneous acetate elimination leads then to andilesin B, which is in turn substrate of the short chain dehydrogenase andH to yield andilesin C. Finally, the dioxygenase andF catalyzes the transformation of andilesin C to anditomin. This chain is Short chain dehydrogenase andI, found in Emericella variicolor (Aspergillus stellatus).